The sequence spans 786 residues: m7GpppN-mRNA hydrolase dcap-2 (786 aa).

A compositionally biased stretch (polar residues) spans Gln25–Ser61. The segment at Gln25–Arg148 is disordered. The span at Lys62–Ala72 shows a compositional bias: basic residues. Composition is skewed to polar residues over residues Met101–Ser111 and Gln118–Glu133. Low complexity predominate over residues Gln134–Tyr144. The 129-residue stretch at Ser238–Phe366 folds into the Nudix hydrolase domain. Residues Gly273–Gly294 carry the Nudix box motif. Glu288 and Glu292 together coordinate Mg(2+). Disordered regions lie at residues Ile556–Ala576 and Ile623–Val655. Composition is skewed to polar residues over residues Ile623–Pro632 and Ser646–Val655.

It belongs to the Nudix hydrolase family. DCP2 subfamily. As to quaternary structure, may be a component of the decapping complex composed of dcap-1 and dcap-2. Mg(2+) is required as a cofactor. Requires Mn(2+) as cofactor. As to expression, expressed in sensory neurons.

The protein localises to the cytoplasmic granule. It localises to the cytoplasm. The protein resides in the perinuclear region. The enzyme catalyses a 5'-end (N(7)-methyl 5'-triphosphoguanosine)-ribonucleoside in mRNA + H2O = N(7)-methyl-GDP + a 5'-end phospho-ribonucleoside in mRNA + 2 H(+). The catalysed reaction is a 5'-end (N(2),N(2),N(7)-trimethyl 5'-triphosphoguanosine)-ribonucleoside in mRNA + H2O = N(2),N(2),N(7)-trimethyl-GDP + a 5'-end phospho-ribonucleoside in mRNA + 2 H(+). Its activity is regulated as follows. Inhibited by capped and uncapped RNA. Not inhibited by dinucleotide cap or methylated nucleotide analogs. Functionally, decapping metalloenzyme that catalyzes the cleavage of the cap structure on mRNAs. Removes the 7-methyl guanine cap structure from mRNA molecules, yielding a 5'-phosphorylated mRNA fragment and 7m-GDP. RNA-decapping enzyme although it does not bind the RNA cap. May contribute to gene regulation in multiple RNA pathways including monomethylguanosine- and trimethylguanosine-capped RNAs. In oocytes, may play a role in the response to stress induced by heat shock, osmotic stress and anoxia. Required for the developmental axon guidance and regrowth of PLM touch receptor neurons. Early in embryogenesis, plays a role in ciliary shape formation in sensory neurons. Promotes survival at high temperatures. This is m7GpppN-mRNA hydrolase dcap-2 from Caenorhabditis elegans.